A 467-amino-acid chain; its full sequence is Probable Xaa-Pro aminopeptidase SMAC_04549 (467 aa).

Positions 263, 274, 397, and 437 each coordinate Mn(2+).

This sequence belongs to the peptidase M24B family. Mn(2+) is required as a cofactor.

It carries out the reaction Release of any N-terminal amino acid, including proline, that is linked to proline, even from a dipeptide or tripeptide.. Its function is as follows. Catalyzes the removal of a penultimate prolyl residue from the N-termini of peptides. This Sordaria macrospora (strain ATCC MYA-333 / DSM 997 / K(L3346) / K-hell) protein is Probable Xaa-Pro aminopeptidase SMAC_04549.